Reading from the N-terminus, the 628-residue chain is DEAD-box ATP-dependent RNA helicase 9 (628 aa).

Residues 98–126 carry the Q motif motif; that stretch reads LEVAKLGISPKIVSQLASRGITKLFPIQR. The 174-residue stretch at 129–302 folds into the Helicase ATP-binding domain; that stretch reads LEPAMQGKDM…QKYLKNPVTI (174 aa). An ATP-binding site is contributed by 142–149; the sequence is AKTGTGKT. Positions 250–253 match the DEAD box motif; it reads DEAD. Residues 331–478 form the Helicase C-terminal domain; the sequence is VLGELIKEHA…KINVEGSDLM (148 aa). Disordered regions lie at residues 496–548 and 571–628; these read GSYG…SGFG and SGFG…FGSS. Low complexity predominate over residues 500-509; sequence RRGSFGSSSS. Residues 510–548 are compositionally biased toward gly residues; it reads RGGGFGDSGFGRSGGGFGRSGGGGFGRSSGGGFGDSGFG.

The protein belongs to the DEAD box helicase family. DDX21/DDX50 subfamily.

The enzyme catalyses ATP + H2O = ADP + phosphate + H(+). This Oryza sativa subsp. japonica (Rice) protein is DEAD-box ATP-dependent RNA helicase 9.